We begin with the raw amino-acid sequence, 416 residues long: Phosphoribosylamine--glycine ligase (416 aa).

The ATP-grasp domain occupies 107 to 303 (KDVMACAGVP…LAGLLMAAAT (197 aa)). 133–184 (LAAFGAPYVVKDDGLAAGKGVVVTDDVEAARAHANACDRVVVEEFLDGPEVS) lines the ATP pocket. Mg(2+) contacts are provided by E273 and N275.

Belongs to the GARS family. Requires Mg(2+) as cofactor. Mn(2+) is required as a cofactor.

The enzyme catalyses 5-phospho-beta-D-ribosylamine + glycine + ATP = N(1)-(5-phospho-beta-D-ribosyl)glycinamide + ADP + phosphate + H(+). It participates in purine metabolism; IMP biosynthesis via de novo pathway; N(1)-(5-phospho-D-ribosyl)glycinamide from 5-phospho-alpha-D-ribose 1-diphosphate: step 2/2. The sequence is that of Phosphoribosylamine--glycine ligase from Streptomyces coelicolor (strain ATCC BAA-471 / A3(2) / M145).